Here is a 238-residue protein sequence, read N- to C-terminus: Large ribosomal subunit protein uL1 (238 aa).

The segment at 217–238 (TNGPGVPVDETIQKNYADDAEA) is disordered.

Belongs to the universal ribosomal protein uL1 family. Part of the 50S ribosomal subunit.

Its function is as follows. Binds directly to 23S rRNA. The L1 stalk is quite mobile in the ribosome, and is involved in E site tRNA release. Protein L1 is also a translational repressor protein, it controls the translation of the L11 operon by binding to its mRNA. The polypeptide is Large ribosomal subunit protein uL1 (Corynebacterium urealyticum (strain ATCC 43042 / DSM 7109)).